Reading from the N-terminus, the 194-residue chain is WASH complex subunit 3 (194 aa).

Met1 is modified (N-acetylmethionine). Residues 46-74 are a coiled coil; it reads TVCEEKLADLSLRIQQIETTLNILDAKLS. Over residues 98–123 the composition is skewed to polar residues; sequence THSEATSEQSQQNSLQDSGPQESEVT. Disordered stretches follow at residues 98 to 125 and 158 to 194; these read THSE…VTPE and SEGL…SFSD.

This sequence belongs to the CCDC53 family. As to quaternary structure, component of the WASH core complex also described as WASH regulatory complex (SHRC) composed of WASHC1, WASHC2, WASHC3, WASHC4 and WASHC5. The WASH core complex associates via WASHC2 with the F-actin-capping protein dimer (formed by CAPZA1, CAPZA2 or CAPZA3 and CAPZB) in a transient or substoichiometric manner which was initially described as WASH complex.

The protein localises to the early endosome. Its function is as follows. Acts as a component of the WASH core complex that functions as a nucleation-promoting factor (NPF) at the surface of endosomes, where it recruits and activates the Arp2/3 complex to induce actin polymerization, playing a key role in the fission of tubules that serve as transport intermediates during endosome sorting. This chain is WASH complex subunit 3, found in Bos taurus (Bovine).